We begin with the raw amino-acid sequence, 246 residues long: Large ribosomal subunit protein uL2 (246 aa).

Residues 197-226 (SPYAHPHGGGSHPKGGTPVPKTAPPGQKVG) form a disordered region.

Belongs to the universal ribosomal protein uL2 family. As to quaternary structure, part of the 50S ribosomal subunit. Forms a bridge to the 30S subunit in the 70S ribosome.

Functionally, one of the primary rRNA binding proteins. Required for association of the 30S and 50S subunits to form the 70S ribosome, for tRNA binding and peptide bond formation. It has been suggested to have peptidyltransferase activity; this is somewhat controversial. Makes several contacts with the 16S rRNA in the 70S ribosome. This is Large ribosomal subunit protein uL2 from Pyrobaculum islandicum (strain DSM 4184 / JCM 9189 / GEO3).